A 1824-amino-acid polypeptide reads, in one-letter code: Afadin (1824 aa).

A Ras-associating 1 domain is found at F39 to D133. Residues L128–E194 form a disordered region. A coiled-coil region spans residues E146–D185. Residues T160–R172 show a composition bias toward basic residues. The segment covering E173–Q189 has biased composition (basic and acidic residues). 3 positions are modified to phosphoserine: S216, S246, and S256. In terms of domain architecture, Ras-associating 2 spans S246 to P348. Positions D349–D371 are enriched in basic and acidic residues. Positions D349–T378 are disordered. 2 positions are modified to phosphoserine: S391 and S424. An FHA domain is found at T426–G492. Phosphoserine is present on residues S512, S557, S562, S589, and S655. The tract at residues F534–S595 is disordered. A compositionally biased stretch (basic and acidic residues) spans Q580–T591. One can recognise a Dilute domain in the interval N668–N908. The PDZ domain maps to I1007–G1093. Residues S1083, S1107, S1126, S1140, S1143, S1172, S1173, S1182, and S1199 each carry the phosphoserine modification. Residues S1107 to T1223 are disordered. Over residues I1113–G1128 the composition is skewed to basic and acidic residues. The segment covering Y1132–S1143 has biased composition (polar residues). Over residues S1152–S1172 the composition is skewed to basic and acidic residues. Residues A1190 to Q1210 show a composition bias toward polar residues. T1211 and T1232 each carry phosphothreonine. Disordered stretches follow at residues A1235–P1473, S1501–Q1528, and R1569–K1824. Phosphoserine is present on S1238. 2 stretches are compositionally biased toward basic and acidic residues: residues Y1252–S1262 and R1274–S1302. At S1275 the chain carries Phosphoserine. A compositionally biased stretch (low complexity) spans S1309 to S1318. Positions S1325 to K1337 are enriched in polar residues. Phosphoserine is present on S1328. T1330 is subject to Phosphothreonine. Positions T1345–V1356 are enriched in low complexity. A compositionally biased stretch (pro residues) spans L1364 to V1373. Basic and acidic residues predominate over residues A1407 to L1441. Residues E1408–S1448 adopt a coiled-coil conformation. Phosphoserine occurs at positions 1501 and 1512. The span at P1515 to Q1528 shows a compositional bias: basic and acidic residues. The stretch at K1523–Q1667 forms a coiled coil. The segment covering E1578–D1589 has biased composition (acidic residues). Basic and acidic residues predominate over residues L1597–E1677. A compositionally biased stretch (pro residues) spans P1694 to Q1709. Phosphoserine is present on residues S1696, S1721, S1774, S1779, and S1799. Residues D1762–D1776 are compositionally biased toward basic and acidic residues. Residue K1807 is modified to N6-acetyllysine. The span at K1813–K1824 shows a compositional bias: basic and acidic residues.

Homodimer. Interacts with F-actin, nectin and NECTIN3. Essential for the association of nectin and E-cadherin. Isoform 1/s-afadin does not interact with F-actin. Interacts with ZO-1 and occludin, but probably in an indirect manner. Interacts with RIT1 and RIT2. Interacts with NRXN1 and BCR. Interacts with ADAM10; the interaction locks ADAM10 at adherens junctions following ADAM10 recruitment to adherens junctions by TSPAN33.

Its subcellular location is the cell junction. It localises to the adherens junction. Belongs to an adhesion system, probably together with the E-cadherin-catenin system, which plays a role in the organization of homotypic, interneuronal and heterotypic cell-cell adherens junctions (AJs). Nectin- and actin-filament-binding protein that connects nectin to the actin cytoskeleton. May play a key role in the organization of epithelial structures of the embryonic ectoderm. Essential for the organization of adherens junctions. This chain is Afadin, found in Homo sapiens (Human).